Reading from the N-terminus, the 130-residue chain is ATP synthase epsilon chain (130 aa).

This sequence belongs to the ATPase epsilon chain family. In terms of assembly, F-type ATPases have 2 components, CF(1) - the catalytic core - and CF(0) - the membrane proton channel. CF(1) has five subunits: alpha(3), beta(3), gamma(1), delta(1), epsilon(1). CF(0) has three main subunits: a, b and c.

Its subcellular location is the cell inner membrane. Produces ATP from ADP in the presence of a proton gradient across the membrane. The chain is ATP synthase epsilon chain from Campylobacter hominis (strain ATCC BAA-381 / DSM 21671 / CCUG 45161 / LMG 19568 / NCTC 13146 / CH001A).